Consider the following 417-residue polypeptide: Gamma-glutamyl phosphate reductase (417 aa).

This sequence belongs to the gamma-glutamyl phosphate reductase family.

It localises to the cytoplasm. It carries out the reaction L-glutamate 5-semialdehyde + phosphate + NADP(+) = L-glutamyl 5-phosphate + NADPH + H(+). It functions in the pathway amino-acid biosynthesis; L-proline biosynthesis; L-glutamate 5-semialdehyde from L-glutamate: step 2/2. Its function is as follows. Catalyzes the NADPH-dependent reduction of L-glutamate 5-phosphate into L-glutamate 5-semialdehyde and phosphate. The product spontaneously undergoes cyclization to form 1-pyrroline-5-carboxylate. In Enterobacter sp. (strain 638), this protein is Gamma-glutamyl phosphate reductase.